A 413-amino-acid polypeptide reads, in one-letter code: MADVSNSEPAIVSPWLTVIGIGEDGVAGLGDEAKRLIAEAPVVYGGHRHLELAASLITGEAHNWLSPLERSVVEIVARRGSPVVVLASGDPFFFGVGVTLARRIASAEIRTLPAPSSISLAASRLGWALQDATLVSVHGRPLDLVRPHLHPGARVLTLTSDGAGPRDLAELLVSSGFGQSRLTVLEALGGAGERVTTQIAARFMLGLVHPLNVCAIEVAADEGARILPLAAGRDDALFEHDGQITKREVRALTLSALAPRKGELLWDIGGGSGSIGIEWMLADPTMQAITIEVEPERAARIGRNATMFGVPGLTVVEGEAPAALAGLPQPDAIFIGGGGSEDGVMEAAIEALKSGGRLVANAVTTDMEAVLLDHHARLGGSLIRIDIARAGPIGGMTGWKPAMPVTQWSWTKG.

Belongs to the precorrin methyltransferase family.

The enzyme catalyses precorrin-6B + 2 S-adenosyl-L-methionine = precorrin-8X + 2 S-adenosyl-L-homocysteine + CO2 + 3 H(+). Its pathway is cofactor biosynthesis; adenosylcobalamin biosynthesis; cob(II)yrinate a,c-diamide from precorrin-2 (aerobic route): step 7/10. Functionally, catalyzes the methylation of both C-5 and C-15 in precorrin-6Y to form precorrin-8X. This is Precorrin-6Y C(5,15)-methyltransferase [decarboxylating] (cobL) from Sinorhizobium sp.